Here is a 128-residue protein sequence, read N- to C-terminus: Large ribosomal subunit protein bL17 (128 aa).

It belongs to the bacterial ribosomal protein bL17 family. Part of the 50S ribosomal subunit. Contacts protein L32.

The polypeptide is Large ribosomal subunit protein bL17 (Tolumonas auensis (strain DSM 9187 / NBRC 110442 / TA 4)).